The following is a 244-amino-acid chain: Ubiquinone biosynthesis O-methyltransferase (244 aa).

Residues R36, G60, D81, and L123 each coordinate S-adenosyl-L-methionine.

The protein belongs to the methyltransferase superfamily. UbiG/COQ3 family.

The catalysed reaction is a 3-demethylubiquinol + S-adenosyl-L-methionine = a ubiquinol + S-adenosyl-L-homocysteine + H(+). It carries out the reaction a 3-(all-trans-polyprenyl)benzene-1,2-diol + S-adenosyl-L-methionine = a 2-methoxy-6-(all-trans-polyprenyl)phenol + S-adenosyl-L-homocysteine + H(+). Its pathway is cofactor biosynthesis; ubiquinone biosynthesis. Its function is as follows. O-methyltransferase that catalyzes the 2 O-methylation steps in the ubiquinone biosynthetic pathway. This chain is Ubiquinone biosynthesis O-methyltransferase, found in Rickettsia felis (strain ATCC VR-1525 / URRWXCal2) (Rickettsia azadi).